Consider the following 430-residue polypeptide: Tol-Pal system protein TolB (430 aa).

The first 21 residues, 1–21 (MKQALRVAFGFLMLWAAVLHA), serve as a signal peptide directing secretion.

The protein belongs to the TolB family. In terms of assembly, the Tol-Pal system is composed of five core proteins: the inner membrane proteins TolA, TolQ and TolR, the periplasmic protein TolB and the outer membrane protein Pal. They form a network linking the inner and outer membranes and the peptidoglycan layer.

The protein localises to the periplasm. In terms of biological role, part of the Tol-Pal system, which plays a role in outer membrane invagination during cell division and is important for maintaining outer membrane integrity. TolB occupies a key intermediary position in the Tol-Pal system because it communicates directly with both membrane-embedded components, Pal in the outer membrane and TolA in the inner membrane. The protein is Tol-Pal system protein TolB of Salmonella choleraesuis (strain SC-B67).